The primary structure comprises 151 residues: 3-hydroxyacyl-[acyl-carrier-protein] dehydratase FabZ (151 aa).

The active site involves His56.

The protein belongs to the thioester dehydratase family. FabZ subfamily.

It localises to the cytoplasm. It carries out the reaction a (3R)-hydroxyacyl-[ACP] = a (2E)-enoyl-[ACP] + H2O. Its function is as follows. Involved in unsaturated fatty acids biosynthesis. Catalyzes the dehydration of short chain beta-hydroxyacyl-ACPs and long chain saturated and unsaturated beta-hydroxyacyl-ACPs. The chain is 3-hydroxyacyl-[acyl-carrier-protein] dehydratase FabZ from Nitrobacter hamburgensis (strain DSM 10229 / NCIMB 13809 / X14).